A 506-amino-acid chain; its full sequence is Maturase K (506 aa).

The protein belongs to the intron maturase 2 family. MatK subfamily.

The protein localises to the plastid. It is found in the chloroplast. In terms of biological role, usually encoded in the trnK tRNA gene intron. Probably assists in splicing its own and other chloroplast group II introns. This is Maturase K from Arabis alpina (Alpine rock-cress).